The sequence spans 247 residues: DNA repair protein RecO (247 aa).

It belongs to the RecO family.

Involved in DNA repair and RecF pathway recombination. The polypeptide is DNA repair protein RecO (Alkalilimnicola ehrlichii (strain ATCC BAA-1101 / DSM 17681 / MLHE-1)).